We begin with the raw amino-acid sequence, 626 residues long: Chaperone protein HtpG (626 aa).

The a; substrate-binding stretch occupies residues 1–341 (MRKKKFKAES…SEDLSLNISR (341 aa)). Residues 342 to 552 (EMLQHDRQLK…DGEVTIEMEK (211 aa)) are b. Residues 553–626 (VLNAMPDSQQ…FTNDICKVMV (74 aa)) are c.

This sequence belongs to the heat shock protein 90 family. As to quaternary structure, homodimer.

The protein resides in the cytoplasm. Its function is as follows. Molecular chaperone. Has ATPase activity. This chain is Chaperone protein HtpG, found in Bacillus velezensis (strain DSM 23117 / BGSC 10A6 / LMG 26770 / FZB42) (Bacillus amyloliquefaciens subsp. plantarum).